We begin with the raw amino-acid sequence, 262 residues long: MQVDLLSSAQSAHALHLFHQHSPLVHCMTNDVVQTFTANTLLALGASPAMVIETEEASQFAAIASALLINVGTLTQPRAQAMSAAVEQATRSQTPWTLDPVAVGALDYRRRFCVELLSHKPTAIRGNASEIMALAGVANGGRGVDTTDAAANAIPAAQTLARETGAIVVVTGEVDYVTDGHRIIGIHGGDPLMTKVVGTGCALSAVVAACCALPGDTLENIASACHWMKQAGERAVARSEGPGSFVPHFLDALWQLAQEVQA.

Met-50 is a binding site for substrate. Arg-125 and Thr-171 together coordinate ATP. Gly-198 provides a ligand contact to substrate.

This sequence belongs to the Thz kinase family. It depends on Mg(2+) as a cofactor.

The catalysed reaction is 5-(2-hydroxyethyl)-4-methylthiazole + ATP = 4-methyl-5-(2-phosphooxyethyl)-thiazole + ADP + H(+). It functions in the pathway cofactor biosynthesis; thiamine diphosphate biosynthesis; 4-methyl-5-(2-phosphoethyl)-thiazole from 5-(2-hydroxyethyl)-4-methylthiazole: step 1/1. Its function is as follows. Catalyzes the phosphorylation of the hydroxyl group of 4-methyl-5-beta-hydroxyethylthiazole (THZ). In Escherichia coli O6:H1 (strain CFT073 / ATCC 700928 / UPEC), this protein is Hydroxyethylthiazole kinase.